Consider the following 565-residue polypeptide: Ubiquitin carboxyl-terminal hydrolase 21 (565 aa).

2 stretches are compositionally biased toward basic and acidic residues: residues 1–14 (MPQA…RTRE) and 58–70 (PPDE…DLGR). The interval 1–128 (MPQASEHRLG…LRPMGIALGG (128 aa)) is disordered. Residues 71-81 (GRTSGSRPRGP) are compositionally biased toward low complexity. Residues 104–116 (SRTNLTRSKSVSS) are compositionally biased toward polar residues. The Nuclear export signal signature appears at 134-152 (ELGAALSRLALRPEPPTLR). One can recognise a USP domain in the interval 212–558 (VGLRNLGNTC…EGYVLFYQLM (347 aa)). The active-site Nucleophile is Cys-221. The segment at 324–347 (APPILASGPVPSPPRRGGALHEEP) is disordered. Cys-384, Cys-387, Cys-437, and Cys-440 together coordinate Zn(2+). The active-site Proton acceptor is His-518.

This sequence belongs to the peptidase C19 family. USP21 subfamily. Interacts with BEND3.

It localises to the cytoplasm. It is found in the nucleus. The catalysed reaction is Thiol-dependent hydrolysis of ester, thioester, amide, peptide and isopeptide bonds formed by the C-terminal Gly of ubiquitin (a 76-residue protein attached to proteins as an intracellular targeting signal).. Deubiquitinates histone H2A, a specific tag for epigenetic transcriptional repression, thereby acting as a coactivator. Deubiquitination of histone H2A releaves the repression of di- and trimethylation of histone H3 at 'Lys-4', resulting in regulation of transcriptional initiation. Regulates gene expression via histone H2A deubiquitination. Deubiquitinates BAZ2A/TIP5 leading to its stabilization. Also capable of removing NEDD8 from NEDD8 conjugates but has no effect on Sentrin-1 conjugates. Also acts as a negative regulator of the ribosome quality control (RQC) by mediating deubiquitination of 40S ribosomal proteins RPS10/eS10 and RPS20/uS10, thereby antagonizing ZNF598-mediated 40S ubiquitination. This is Ubiquitin carboxyl-terminal hydrolase 21 (Usp21) from Rattus norvegicus (Rat).